The chain runs to 168 residues: Cyclic pyranopterin monophosphate synthase (168 aa).

Substrate-binding positions include 81–83 (LCH) and 117–118 (ME). Asp-132 is a catalytic residue.

This sequence belongs to the MoaC family. In terms of assembly, homohexamer; trimer of dimers.

It catalyses the reaction (8S)-3',8-cyclo-7,8-dihydroguanosine 5'-triphosphate = cyclic pyranopterin phosphate + diphosphate. It functions in the pathway cofactor biosynthesis; molybdopterin biosynthesis. Its function is as follows. Catalyzes the conversion of (8S)-3',8-cyclo-7,8-dihydroguanosine 5'-triphosphate to cyclic pyranopterin monophosphate (cPMP). The chain is Cyclic pyranopterin monophosphate synthase from Deinococcus radiodurans (strain ATCC 13939 / DSM 20539 / JCM 16871 / CCUG 27074 / LMG 4051 / NBRC 15346 / NCIMB 9279 / VKM B-1422 / R1).